The primary structure comprises 305 residues: uncharacterized protein (305 aa).

Residues Met-1–Val-29 form the signal peptide.

This is an uncharacterized protein from Archaeoglobus fulgidus (strain ATCC 49558 / DSM 4304 / JCM 9628 / NBRC 100126 / VC-16).